The sequence spans 238 residues: Sugar fermentation stimulation protein homolog (238 aa).

This sequence belongs to the SfsA family.

This chain is Sugar fermentation stimulation protein homolog, found in Pseudoalteromonas translucida (strain TAC 125).